The primary structure comprises 652 residues: DNA ligase (652 aa).

Residues 29–33, 78–79, and Glu-107 contribute to the NAD(+) site; these read DSEYD and SL. The N6-AMP-lysine intermediate role is filled by Lys-109. NAD(+) is bound by residues Arg-130, Glu-164, Lys-278, and Lys-302. Residues Cys-395, Cys-398, Cys-413, and Cys-418 each contribute to the Zn(2+) site. The 76-residue stretch at 577–652 folds into the BRCT domain; it reads VADAALSGLT…VRDEAWLESL (76 aa).

The protein belongs to the NAD-dependent DNA ligase family. LigA subfamily. Mg(2+) serves as cofactor. Mn(2+) is required as a cofactor.

It carries out the reaction NAD(+) + (deoxyribonucleotide)n-3'-hydroxyl + 5'-phospho-(deoxyribonucleotide)m = (deoxyribonucleotide)n+m + AMP + beta-nicotinamide D-nucleotide.. Functionally, DNA ligase that catalyzes the formation of phosphodiester linkages between 5'-phosphoryl and 3'-hydroxyl groups in double-stranded DNA using NAD as a coenzyme and as the energy source for the reaction. It is essential for DNA replication and repair of damaged DNA. In Streptococcus pneumoniae (strain P1031), this protein is DNA ligase.